The primary structure comprises 905 residues: Protein translocase subunit SecA (905 aa).

ATP contacts are provided by residues Q86, 104–108 (GEGKT), and D499. Zn(2+)-binding residues include C890, C892, C901, and H902.

It belongs to the SecA family. In terms of assembly, monomer and homodimer. Part of the essential Sec protein translocation apparatus which comprises SecA, SecYEG and auxiliary proteins SecDF-YajC and YidC. It depends on Zn(2+) as a cofactor.

It is found in the cell inner membrane. It localises to the cytoplasm. It catalyses the reaction ATP + H2O + cellular proteinSide 1 = ADP + phosphate + cellular proteinSide 2.. In terms of biological role, part of the Sec protein translocase complex. Interacts with the SecYEG preprotein conducting channel. Has a central role in coupling the hydrolysis of ATP to the transfer of proteins into and across the cell membrane, serving both as a receptor for the preprotein-SecB complex and as an ATP-driven molecular motor driving the stepwise translocation of polypeptide chains across the membrane. The polypeptide is Protein translocase subunit SecA (Rickettsia typhi (strain ATCC VR-144 / Wilmington)).